We begin with the raw amino-acid sequence, 148 residues long: MLERLYDANIYNILSRLRPEKVRNKAIELYWVFRAIHICHAPLVLDIVRYEEPDFAELAFICAAYFGEPQVMYLLYKYMPLTRAVLTDAIQISLESNNQVGICYAYLMGGSLKGLVSAPLRKRLRAKLRSQRKKKDVLSPHDFLLLLQ.

Belongs to the asfivirus MGF 360 family.

Plays a role in virus cell tropism, and may be required for efficient virus replication in macrophages. This chain is Protein MGF 360-18R, found in African swine fever virus (strain Badajoz 1971 Vero-adapted) (Ba71V).